The primary structure comprises 292 residues: Ribosomal protein L11 methyltransferase (292 aa).

The S-adenosyl-L-methionine site is built by threonine 145, glycine 166, aspartate 188, and asparagine 229.

Belongs to the methyltransferase superfamily. PrmA family.

The protein localises to the cytoplasm. The catalysed reaction is L-lysyl-[protein] + 3 S-adenosyl-L-methionine = N(6),N(6),N(6)-trimethyl-L-lysyl-[protein] + 3 S-adenosyl-L-homocysteine + 3 H(+). Methylates ribosomal protein L11. The sequence is that of Ribosomal protein L11 methyltransferase from Alteromonas mediterranea (strain DSM 17117 / CIP 110805 / LMG 28347 / Deep ecotype).